Reading from the N-terminus, the 195-residue chain is Protein GrpE (195 aa).

Residues 1 to 20 (MSSKEQKTPDEQVLDQKEAA) show a composition bias toward basic and acidic residues. The tract at residues 1–40 (MSSKEQKTPDEQVLDQKEAAKGQQADAAPETADVADPRDE) is disordered.

It belongs to the GrpE family. In terms of assembly, homodimer.

It is found in the cytoplasm. In terms of biological role, participates actively in the response to hyperosmotic and heat shock by preventing the aggregation of stress-denatured proteins, in association with DnaK and GrpE. It is the nucleotide exchange factor for DnaK and may function as a thermosensor. Unfolded proteins bind initially to DnaJ; upon interaction with the DnaJ-bound protein, DnaK hydrolyzes its bound ATP, resulting in the formation of a stable complex. GrpE releases ADP from DnaK; ATP binding to DnaK triggers the release of the substrate protein, thus completing the reaction cycle. Several rounds of ATP-dependent interactions between DnaJ, DnaK and GrpE are required for fully efficient folding. The chain is Protein GrpE from Pectobacterium atrosepticum (strain SCRI 1043 / ATCC BAA-672) (Erwinia carotovora subsp. atroseptica).